The sequence spans 215 residues: Mediator of RNA polymerase II transcription subunit 20 (215 aa).

It belongs to the Mediator complex subunit 20 family. In terms of assembly, component of the Mediator complex.

The protein localises to the nucleus. Its function is as follows. Component of the Mediator complex, a coactivator involved in the regulated transcription of nearly all RNA polymerase II-dependent genes. Mediator functions as a bridge to convey information from gene-specific regulatory proteins to the basal RNA polymerase II transcription machinery. Mediator is recruited to promoters by direct interactions with regulatory proteins and serves as a scaffold for the assembly of a functional preinitiation complex with RNA polymerase II and the general transcription factors. This Candida glabrata (strain ATCC 2001 / BCRC 20586 / JCM 3761 / NBRC 0622 / NRRL Y-65 / CBS 138) (Yeast) protein is Mediator of RNA polymerase II transcription subunit 20 (SRB2).